Consider the following 1370-residue polypeptide: DNA-directed RNA polymerase subunit beta (1370 aa).

Belongs to the RNA polymerase beta chain family. As to quaternary structure, the RNAP catalytic core consists of 2 alpha, 1 beta, 1 beta' and 1 omega subunit. When a sigma factor is associated with the core the holoenzyme is formed, which can initiate transcription.

The catalysed reaction is RNA(n) + a ribonucleoside 5'-triphosphate = RNA(n+1) + diphosphate. In terms of biological role, DNA-dependent RNA polymerase catalyzes the transcription of DNA into RNA using the four ribonucleoside triphosphates as substrates. In Bordetella avium (strain 197N), this protein is DNA-directed RNA polymerase subunit beta.